A 2843-amino-acid chain; its full sequence is MAAASYDQLLKQVEALKMENSNLRQELEDNSNHLTKLETEASNMKEVLKQLQGSIEDEAMASSGQIDLLERLKELNLDSSNFPGVKLRSKMSLRSYGSREGSVSSRSGECSPVPMGSFPRRGFVNGSRESTGYLEELEKERSLLLADLDKEEKEKDWYYAQLQNLTKRIDSLPLTENFSLQTDMTRRQLEYEARQIRVAMEEQLGTCQDMEKRAQRRIARIQQIEKDILRIRQLLQSQATEAERSSQNKHETGSHDAERQNEGQGVGEINMATSGNGQGSTTRMDHETASVLSSSSTHSAPRRLTSHLGTKVEMVYSLLSMLGTHDKDDMSRTLLAMSSSQDSCISMRQSGCLPLLIQLLHGNDKDSVLLGNSRGSKEARARASAALHNIIHSQPDDKRGRREIRVLHLLEQIRAYCETCWEWQEAHEPGMDQDKNPMPAPVEHQICPAVCVLMKLSFDEEHRHAMNELGGLQAIAELLQVDCEMYGLTNDHYSITLRRYAGMALTNLTFGDVANKATLCSMKGCMRALVAQLKSESEDLQQVIASVLRNLSWRADVNSKKTLREVGSVKALMECALEVKKESTLKSVLSALWNLSAHCTENKADICAVDGALAFLVGTLTYRSQTNTLAIIESGGGILRNVSSLIATNEDHRQILRENNCLQTLLQHLKSHSLTIVSNACGTLWNLSARNPKDQEALWDMGAVSMLKNLIHSKHKMIAMGSAAALRNLMANRPAKYKDANIMSPGSSLPSLHVRKQKALEAELDAQHLSETFDNIDNLSPKASHRSKQRHKQSLYGDYVFDTNRHDDNRSDNFNTGNMTVLSPYLNTTVLPSSSSSRGSLDSSRSEKDRSLERERGIGLGNYHPATENPGTSSKRGLQISTTAAQIAKVMEEVSAIHTSQEDRSSGSTTELHCVTDERNALRRSSAAHTHSNTYNFTKSENSNRTCSMPYAKLEYKRSSNDSLNSVSSSDGYGKRGQMKPSIESYSEDDESKFCSYGQYPADLAHKIHSANHMDDNDGELDTPINYSLKYSDEQLNSGRQSPSQNERWARPKHIIEDEIKQSEQRQSRNQSTTYPVYTESTDDKHLKFQPHFGQQECVSPYRSRGANGSETNRVGSNHGINQNVSQSLCQEDDYEDDKPTNYSERYSEEEQHEEEERPTNYSIKYNEEKRHVDQPIDYSLKYATDIPSSQKQSFSFSKSSSGQSSKTEHMSSSSENTSTPSSNAKRQNQLHPSSAQSRSGQPQKAATCKVSSINQETIQTYCVEDTPICFSRCSSLSSLSSAEDEIGCNQTTQEADSANTLQIAEIKEKIGTRSAEDPVSEVPAVSQHPRTKSSRLQGSSLSSESARHKAVEFSSGAKSPSKSGAQTPKSPPEHYVQETPLMFSRCTSVSSLDSFESRSIASSVQSEPCSGMVSGIISPSDLPDSPGQTMPPSRSKTPPPPPQTAQTKREVPKNKAPTAEKRESGPKQAAVNAAVQRVQVLPDADTLLHFATESTPDGFSCSSSLSALSLDEPFIQKDVELRIMPPVQENDNGNETESEQPKESNENQEKEAEKTIDSEKDLLDDSDDDDIEILEECIISAMPTKSSRKAKKPAQTASKLPPPVARKPSQLPVYKLLPSQNRLQPQKHVSFTPGDDMPRVYCVEGTPINFSTATSLSDLTIESPPNELAAGEGVRGGAQSGEFEKRDTIPTEGRSTDEAQGGKTSSVTIPELDDNKAEEGDILAECINSAMPKGKSHKPFRVKKIMDQVQQASASSSAPNKNQLDGKKKKPTSPVKPIPQNTEYRTRVRKNADSKNNLNAERVFSDNKDSKKQNLKNNSKVFNDKLPNNEDRVRGSFAFDSPHHYTPIEGTPYCFSRNDSLSSLDFDDDDVDLSREKAELRKAKENKESEAKVTSHTELTSNQQSANKTQAIAKQPINRGQPKPILQKQSTFPQSSKDIPDRGAATDEKLQNFAIENTPVCFSHNSSLSSLSDIDQENNNKENEPIKETEPPDSQGEPSKPQASGYAPKSFHVEDTPVCFSRNSSLSSLSIDSEDDLLQECISSAMPKKKKPSRLKGDNEKHSPRNMGGILGEDLTLDLKDIQRPDSEHGLSPDSENFDWKAIQEGANSIVSSLHQAAAAACLSRQASSDSDSILSLKSGISLGSPFHLTPDQEEKPFTSNKGPRILKPGEKSTLETKKIESESKGIKGGKKVYKSLITGKVRSNSEISGQMKQPLQANMPSISRGRTMIHIPGVRNSSSSTSPVSKKGPPLKTPASKSPSEGQTATTSPRGAKPSVKSELSPVARQTSQIGGSSKAPSRSGSRDSTPSRPAQQPLSRPIQSPGRNSISPGRNGISPPNKLSQLPRTSSPSTASTKSSGSGKMSYTSPGRQMSQQNLTKQTGLSKNASSIPRSESASKGLNQMNNGNGANKKVELSRMSSTKSSGSESDRSERPVLVRQSTFIKEAPSPTLRRKLEESASFESLSPSSRPASPTRSQAQTPVLSPSLPDMSLSTHSSVQAGGWRKLPPNLSPTIEYNDGRPAKRHDIARSHSESPSRLPINRSGTWKREHSKHSSSLPRVSTWRRTGSSSSILSASSESSEKAKSEDEKHVNSISGTKQSKENQVSAKGTWRKIKENEFSPTNSTSQTVSSGATNGAESKTLIYQMAPAVSKTEDVWVRIEDCPINNPRSGRSPTGNTPPVIDSVSEKANPNIKDSKDNQAKQNVGNGSVPMRTVGLENRLNSFIQVDAPDQKGTEIKPGQNNPVPVSETNESSIVERTPFSSSSSSKHSSPSGTVAARVTPFNYNPSPRKSSADSTSARPSQIPTPVNNNTKKRDSKTDSTESSGTQSPKRHSGSYLVTSV.

Ala-2 is modified (N-acetylalanine). The stretch at 2–61 (AAASYDQLLKQVEALKMENSNLRQELEDNSNHLTKLETEASNMKEVLKQLQGSIEDEAMA) forms a coiled coil. A phosphoserine mark is found at Ser-107 and Ser-111. A coiled-coil region spans residues 127–248 (SRESTGYLEE…ATEAERSSQN (122 aa)). A disordered region spans residues 239 to 305 (ATEAERSSQN…STHSAPRRLT (67 aa)). The span at 241 to 261 (EAERSSQNKHETGSHDAERQN) shows a compositional bias: basic and acidic residues. The segment covering 271–282 (MATSGNGQGSTT) has biased composition (polar residues). The span at 290 to 299 (SVLSSSSTHS) shows a compositional bias: low complexity. ARM repeat units lie at residues 453-495 (LMKL…HYSI), 505-547 (LTNL…IASV), 548-591 (LRNL…VLSA), 592-638 (LWNL…GGGI), 639-683 (LRNV…ACGT), 684-725 (LWNL…SAAA), and 726-767 (LRNL…LDAQ). Phosphoserine occurs at positions 744, 748, and 780. The disordered stretch occupies residues 828–878 (TTVLPSSSSSRGSLDSSRSEKDRSLERERGIGLGNYHPATENPGTSSKRGL). A compositionally biased stretch (low complexity) spans 833-843 (SSSSSRGSLDS). The span at 844-857 (SRSEKDRSLERERG) shows a compositional bias: basic and acidic residues. The segment covering 869–878 (NPGTSSKRGL) has biased composition (polar residues). A Phosphoserine modification is found at Ser-908. 2 disordered regions span residues 923-943 (RRSS…SENS) and 958-987 (RSSN…ESYS). The span at 927–943 (AAHTHSNTYNFTKSENS) shows a compositional bias: polar residues. A responsible for down-regulation through a process mediated by direct ubiquitination region spans residues 960–1337 (SNDSLNSVSS…QHPRTKSSRL (378 aa)). The span at 961 to 971 (NDSLNSVSSSD) shows a compositional bias: low complexity. Ser-987, Ser-1038, and Ser-1042 each carry phosphoserine. The tract at residues 1020 to 1169 (ELDTPINYSL…TNYSIKYNEE (150 aa)) is interaction with catenins. 3 disordered regions span residues 1099-1169 (VSPY…YNEE), 1190-1244 (SQKQ…GQPQ), and 1311-1376 (IGTR…PEHY). Positions 1107–1130 (ANGSETNRVGSNHGINQNVSQSLC) are enriched in polar residues. The segment covering 1146-1159 (RYSEEEQHEEEERP) has biased composition (basic and acidic residues). The span at 1190–1224 (SQKQSFSFSKSSSGQSSKTEHMSSSSENTSTPSSN) shows a compositional bias: low complexity. The span at 1225–1244 (AKRQNQLHPSSAQSRSGQPQ) shows a compositional bias: polar residues. 2 stretches are compositionally biased toward low complexity: residues 1335–1345 (SRLQGSSLSSE) and 1355–1366 (SSGAKSPSKSGA). Phosphoserine occurs at positions 1360, 1371, 1385, 1392, and 1395. Disordered stretches follow at residues 1403 to 1475 (SSVQ…VNAA), 1526 to 1569 (PPVQ…DSDD), 1583 to 1611 (MPTK…KPSQ), 1664 to 1717 (SPPN…DDNK), and 1729 to 1836 (NSAM…RVRG). Thr-1438 bears the Phosphothreonine mark. Composition is skewed to basic and acidic residues over residues 1448–1466 (TKRE…RESG) and 1540–1564 (EQPK…KDLL). Ser-1567 is subject to Phosphoserine. The span at 1683–1698 (EFEKRDTIPTEGRSTD) shows a compositional bias: basic and acidic residues. Positions 1735-1744 (GKSHKPFRVK) are enriched in basic residues. Ser-1774 carries the post-translational modification Phosphoserine. 2 stretches are compositionally biased toward basic and acidic residues: residues 1785 to 1794 (YRTRVRKNAD) and 1804 to 1813 (VFSDNKDSKK). Residues Ser-1861, Ser-1863, and Ser-1864 each carry the phosphoserine modification. The interval 1866 to 1893 (DFDDDDVDLSREKAELRKAKENKESEAK) is highly charged. Over residues 1881-1896 (LRKAKENKESEAKVTS) the composition is skewed to basic and acidic residues. 3 disordered regions span residues 1881–1950 (LRKA…TDEK), 1965–2011 (HNSS…APKS), and 2043–2072 (ISSA…GGIL). 2 stretches are compositionally biased toward polar residues: residues 1897–1913 (HTEL…TQAI) and 1928–1938 (QKQSTFPQSSK). Positions 1939 to 1950 (DIPDRGAATDEK) are enriched in basic and acidic residues. Residues Ser-1971 and Ser-1973 each carry the phosphoserine modification. The span at 1979 to 1991 (NNNKENEPIKETE) shows a compositional bias: basic and acidic residues. The interaction with AXIN1 stretch occupies residues 2035–2059 (EDDLLQECISSAMPKKKKPSRLKGD). Residues Ser-2088, Ser-2093, Ser-2125, Ser-2129, Ser-2130, and Ser-2132 each carry the phosphoserine modification. Disordered regions lie at residues 2147–2635 (PFHL…SGAT) and 2667–2714 (NNPR…VPMR). A Phosphothreonine modification is found at Thr-2151. The interval 2167–2674 (ILKPGEKSTL…PINNPRSGRS (508 aa)) is basic region. Positions 2169-2187 (KPGEKSTLETKKIESESKG) are enriched in basic and acidic residues. Composition is skewed to polar residues over residues 2203 to 2223 (VRSN…NMPS) and 2257 to 2271 (ASKS…TTSP). Ser-2260, Ser-2270, and Ser-2283 each carry phosphoserine. Residues 2286 to 2331 (ARQTSQIGGSSKAPSRSGSRDSTPSRPAQQPLSRPIQSPGRNSISP) are compositionally biased toward polar residues. A compositionally biased stretch (low complexity) spans 2348-2369 (TSSPSTASTKSSGSGKMSYTSP). 2 stretches are compositionally biased toward polar residues: residues 2370-2409 (GRQM…NGNG) and 2418-2427 (RMSSTKSSGS). Residues 2459–2477 (SASFESLSPSSRPASPTRS) show a composition bias toward low complexity. Phosphoserine occurs at positions 2473 and 2535. The segment at 2475–2843 (TRSQAQTPVL…HSGSYLVTSV (369 aa)) is interaction with DLG1. A compositionally biased stretch (basic and acidic residues) spans 2518 to 2535 (NDGRPAKRHDIARSHSES). The span at 2555 to 2568 (SSSLPRVSTWRRTG) shows a compositional bias: polar residues. Residue Ser-2569 is modified to Phosphoserine. Low complexity predominate over residues 2569–2579 (SSSSILSASSE). The segment covering 2580-2592 (SSEKAKSEDEKHV) has biased composition (basic and acidic residues). Composition is skewed to polar residues over residues 2593-2608 (NSIS…QVSA), 2620-2635 (FSPT…SGAT), and 2668-2679 (NPRSGRSPTGNT). 2 positions are modified to phosphoserine: Ser-2671 and Ser-2674. Positions 2674 to 2843 (SPTGNTPPVI…HSGSYLVTSV (170 aa)) are interaction with MAPRE1. A Phosphothreonine modification is found at Thr-2679. Residues Ser-2710 and Ser-2724 each carry the phosphoserine modification. A disordered region spans residues 2729-2843 (DAPDQKGTEI…HSGSYLVTSV (115 aa)). Over residues 2741 to 2757 (GQNNPVPVSETNESSIV) the composition is skewed to polar residues. Positions 2763–2774 (SSSSSSKHSSPS) are enriched in low complexity. Residues 2784–2812 (FNYNPSPRKSSADSTSARPSQIPTPVNNN) show a composition bias toward polar residues. The residue at position 2789 (Ser-2789) is a Phosphoserine. Positions 2803 to 2806 (SQIP) match the Microtubule tip localization signal motif. Positions 2841 to 2843 (TSV) match the PDZ-binding motif.

It belongs to the adenomatous polyposis coli (APC) family. As to quaternary structure, forms homooligomers. Found in a complex consisting of ARHGEF4, APC and CTNNB1. Found in a complex composed of MACF1, APC, AXIN1, CTNNB1 and GSK3B. The complex composed, at least, of APC, CTNNB1 and GSK3B interacts with JPT1; the interaction requires the inactive form of GSK3B (phosphorylated at 'Ser-9'). Interacts with APC2. Interacts with DLG1 (via PDZ domains) and DLG3 (via PDZ domains). Interacts with alpha- and beta-catenins. Interacts with AXIN1 (via RGS domain). Interacts with ARHGEF4 (via N-terminus). Interacts (via C-terminal residues 2674-2843) with MAPRE1 (via C-terminal residues 206-211); the interaction inhibits association with and bundling of F-actin. Interacts with MAPRE2 and MAPRE3 (via C-terminus). Interacts with DIAPH1; DIAPH1 acts as a scaffold protein for MAPRE1 and APC to stabilize microtubules and promote cell migration. Interacts with DIAPH2. Interacts with SCRIB; may mediate APC targeting to adherens junctions of epithelial cells. Interacts with SPATA13 (via N-terminus and SH3 domain). Interacts with ASAP1 (via SH3 domain). Interacts (at the cell membrane) with AMER1 and AMER2 (via ARM repeats). Interacts with KHDRBS1. Interacts with actin; binds both to F-actin and actin filament bundles. In terms of processing, phosphorylated; phosphorylation enhances the F-actin bundling activity. Phosphorylated by GSK3B. Ubiquitinated, leading to its degradation by the proteasome. Ubiquitination is facilitated by Axin. Deubiquitinated by ZRANB1/TRABID. In terms of tissue distribution, expressed in a variety of tissues: brain, small intestine, colon, thymus, skeletal muscle, heart, prostate, lung, spleen, ovary, testis kidney, placenta, blood and liver. Isoform 1A: Very strongly expressed in brain but has relatively low expression levels in other tissues. Isoform 1B: Predominant form in all tissues except for brain, including gastric mucosa and blood.

The protein resides in the cell junction. Its subcellular location is the adherens junction. It is found in the cytoplasm. It localises to the cytoskeleton. The protein localises to the cell projection. The protein resides in the lamellipodium. Its subcellular location is the ruffle membrane. It is found in the cell membrane. Functionally, tumor suppressor. Promotes rapid degradation of CTNNB1 and participates in Wnt signaling as a negative regulator. APC activity is correlated with its phosphorylation state. Activates the GEF activity of SPATA13 and ARHGEF4. Plays a role in hepatocyte growth factor (HGF)-induced cell migration. Required for MMP9 up-regulation via the JNK signaling pathway in colorectal tumor cells. Associates with both microtubules and actin filaments, components of the cytoskeleton. Plays a role in mediating the organization of F-actin into ordered bundles. Functions downstream of Rho GTPases and DIAPH1 to selectively stabilize microtubules. Acts as a mediator of ERBB2-dependent stabilization of microtubules at the cell cortex. It is required for the localization of MACF1 to the cell membrane and this localization of MACF1 is critical for its function in microtubule stabilization. This chain is Adenomatous polyposis coli protein, found in Homo sapiens (Human).